We begin with the raw amino-acid sequence, 191 residues long: Signal peptidase IB (191 aa).

Residues M1–E7 lie on the Cytoplasmic side of the membrane. Residues W8–T28 form a helical membrane-spanning segment. At P29–N191 the chain is on the extracellular side. Catalysis depends on residues S36 and K77.

This sequence belongs to the peptidase S26 family.

It localises to the cell membrane. The catalysed reaction is Cleavage of hydrophobic, N-terminal signal or leader sequences from secreted and periplasmic proteins.. Functionally, essential for cell viability. The sequence is that of Signal peptidase IB (spsB) from Staphylococcus aureus (strain COL).